Consider the following 107-residue polypeptide: Integration host factor subunit beta (107 aa).

The segment at P78–R107 is disordered. Basic and acidic residues predominate over residues P82–D101.

The protein belongs to the bacterial histone-like protein family. In terms of assembly, heterodimer of an alpha and a beta chain.

In terms of biological role, this protein is one of the two subunits of integration host factor, a specific DNA-binding protein that functions in genetic recombination as well as in transcriptional and translational control. The sequence is that of Integration host factor subunit beta from Burkholderia multivorans (strain ATCC 17616 / 249).